Reading from the N-terminus, the 1633-residue chain is Laminin-like protein lam-2 (1633 aa).

An N-terminal signal peptide occupies residues 1 to 19 (MTSILWLFSLAVLWHMGQP). The Laminin N-terminal domain maps to 47–286 (QPQRCVPDFV…AISDFAVGGR (240 aa)). Residues Asn-116 and Asn-136 are each glycosylated (N-linked (GlcNAc...) asparagine). 16 disulfides stabilise this stretch: Cys-287/Cys-296, Cys-289/Cys-310, Cys-312/Cys-321, Cys-324/Cys-344, Cys-347/Cys-356, Cys-349/Cys-372, Cys-375/Cys-384, Cys-387/Cys-400, Cys-403/Cys-415, Cys-405/Cys-421, Cys-423/Cys-432, Cys-435/Cys-447, Cys-450/Cys-464, Cys-452/Cys-471, Cys-473/Cys-482, and Cys-485/Cys-500. Laminin EGF-like domains follow at residues 287–346 (CKCN…ECIA), 347–402 (CNCS…YCVA), 403–449 (CGCN…GCKN), and 450–502 (CGCE…GCTP). Asn-348 carries N-linked (GlcNAc...) asparagine glycosylation. Positions 503–512 (CFCFGHSSIC) constitute a Laminin EGF-like 5; first part domain. Asn-522, Asn-658, and Asn-740 each carry an N-linked (GlcNAc...) asparagine glycan. The 173-residue stretch at 529 to 701 (QDKQKWAGQN…NPKQATWIEH (173 aa)) folds into the Laminin IV type A domain. The region spanning 702 to 747 (CECLPGFVGQFCESCESGFRRETKFGGPFNHCIKCDCHNHSNSCEA) is the Laminin EGF-like 5; second part domain. Cystine bridges form between Cys-736–Cys-745, Cys-738–Cys-752, Cys-754–Cys-763, Cys-766–Cys-782, Cys-785–Cys-803, Cys-806–Cys-815, Cys-818–Cys-832, Cys-835–Cys-849, Cys-837–Cys-856, Cys-859–Cys-868, Cys-871–Cys-887, Cys-890–Cys-909, Cys-892–Cys-916, Cys-918–Cys-927, Cys-930–Cys-943, Cys-946–Cys-958, Cys-948–Cys-965, Cys-967–Cys-976, Cys-979–Cys-991, Cys-994–Cys-1006, Cys-996–Cys-1013, Cys-1015–Cys-1024, and Cys-1027–Cys-1038. The Laminin EGF-like 6; truncated domain maps to 752–784 (CICEHNTAGDTCERCARGYYGDALQGTEEDCQK). 5 Laminin EGF-like domains span residues 785-834 (CPCP…ECVE), 835-889 (CACS…NCQS), 890-945 (CGCF…GCQE), 946-993 (CNCD…GCQP), and 994-1040 (CDCE…GCLP). N-linked (GlcNAc...) asparagine glycosylation occurs at Asn-936. 7 N-linked (GlcNAc...) asparagine glycosylation sites follow: Asn-1077, Asn-1183, Asn-1226, Asn-1259, Asn-1336, Asn-1452, and Asn-1528.

Its function is as follows. During the formation of neuromuscular junctions at the larval stage, negatively regulates membrane protrusion from body wall muscles, probably downstream of the integrin complex formed by pat-2 and pat-3. The protein is Laminin-like protein lam-2 (lam-2) of Caenorhabditis elegans.